Reading from the N-terminus, the 637-residue chain is Threonine--tRNA ligase (637 aa).

A TGS domain is found at 1 to 65; the sequence is MIAIQLPDGS…EADEALSIIT (65 aa). A catalytic region spans residues 246-537; the sequence is DHRKLGRELD…LIEEHAGALP (292 aa). The Zn(2+) site is built by Cys-337, His-388, and His-514.

It belongs to the class-II aminoacyl-tRNA synthetase family. As to quaternary structure, homodimer. Zn(2+) serves as cofactor.

It is found in the cytoplasm. The catalysed reaction is tRNA(Thr) + L-threonine + ATP = L-threonyl-tRNA(Thr) + AMP + diphosphate + H(+). Functionally, catalyzes the attachment of threonine to tRNA(Thr) in a two-step reaction: L-threonine is first activated by ATP to form Thr-AMP and then transferred to the acceptor end of tRNA(Thr). Also edits incorrectly charged L-seryl-tRNA(Thr). The chain is Threonine--tRNA ligase from Leptothrix cholodnii (strain ATCC 51168 / LMG 8142 / SP-6) (Leptothrix discophora (strain SP-6)).